A 151-amino-acid polypeptide reads, in one-letter code: uncharacterized protein (151 aa).

The protein to B.subtilis pcf and to sigma factors.

This is an uncharacterized protein from Bacillus subtilis (strain 168).